The primary structure comprises 121 residues: Small ribosomal subunit protein uS13 (121 aa).

A disordered region spans residues 99–121 (GQRTRTNARTRRGARKTVAGKKK). Over residues 100–121 (QRTRTNARTRRGARKTVAGKKK) the composition is skewed to basic residues.

It belongs to the universal ribosomal protein uS13 family. As to quaternary structure, part of the 30S ribosomal subunit. Forms a loose heterodimer with protein S19. Forms two bridges to the 50S subunit in the 70S ribosome.

Functionally, located at the top of the head of the 30S subunit, it contacts several helices of the 16S rRNA. In the 70S ribosome it contacts the 23S rRNA (bridge B1a) and protein L5 of the 50S subunit (bridge B1b), connecting the 2 subunits; these bridges are implicated in subunit movement. Contacts the tRNAs in the A and P-sites. This chain is Small ribosomal subunit protein uS13, found in Synechococcus sp. (strain RCC307).